We begin with the raw amino-acid sequence, 363 residues long: Mitochondrial RNA-splicing protein MRS1 (363 aa).

Homodimer. Forms a ribonucleoprotein complex composed of maturase bI3 and 2 dimers of MRS1 that assemble around the bI3 RNA.

The protein resides in the mitochondrion matrix. In terms of biological role, function in mitochondrial RNA splicing in the excision of mitochondrial group I introns aI5 beta from COX1 and bI3 from COB transcripts and thus would be involved in obtaining the correct structure of the intron, to allow the RNA catalyzed reactions to occur. This chain is Mitochondrial RNA-splicing protein MRS1 (MRS1), found in Saccharomyces cerevisiae (strain ATCC 204508 / S288c) (Baker's yeast).